Here is a 449-residue protein sequence, read N- to C-terminus: Sensor protein QseC (449 aa).

Over Met-1–Arg-12 the chain is Cytoplasmic. A helical membrane pass occupies residues Leu-13 to Trp-33. Residues Lys-34–Ala-156 lie on the Periplasmic side of the membrane. A helical transmembrane segment spans residues Leu-157–Ile-177. Residues Met-178–Trp-449 lie on the Cytoplasmic side of the membrane. The region spanning Asp-243–Trp-449 is the Histidine kinase domain. Residue His-246 is modified to Phosphohistidine; by autocatalysis.

It is found in the cell inner membrane. The catalysed reaction is ATP + protein L-histidine = ADP + protein N-phospho-L-histidine.. Its function is as follows. Member of a two-component regulatory system QseB/QseC. Activates the flagella regulon by activating transcription of FlhDC. May activate QseB by phosphorylation. The sequence is that of Sensor protein QseC (qseC) from Escherichia coli O157:H7.